The sequence spans 519 residues: 4-nitrophenol 2-monooxygenase, oxygenase component (519 aa).

It belongs to the FADH(2)-utilizing monooxygenase family. As to quaternary structure, homotetramer. 4-nitrophenol 2-monooxygenase complex consists of an oxygenase component NphA1 and a flavin reductase component NphA2. FAD serves as cofactor.

It catalyses the reaction 4-nitrophenol + NADH + O2 + H(+) = 4-nitrocatechol + NAD(+) + H2O. With respect to regulation, partially inhibited by concentrations of FAD above 10 uM and completely inhibited by concentrations above 50 uM. In terms of biological role, utilizes the flavins supplied by NphA2 to catalyze the degradation of 4-nitrophenol (4-NP) via 4-nitrocatechol (4-NC) which is used as the sole carbon, nitrogen, and energy source. Can also degrade phenol and 4-chlorophenol as rapidly as 4-NP. This is 4-nitrophenol 2-monooxygenase, oxygenase component (nphA1) from Rhodococcus sp.